Reading from the N-terminus, the 441-residue chain is Protein dcd1A (441 aa).

Positions 1–23 (MKIFNKLIFLIIQCILIISVTNA) are cleaved as a signal peptide. N-linked (GlcNAc...) asparagine glycosylation is found at Asn-45, Asn-261, Asn-308, and Asn-419.

The protein resides in the secreted. The chain is Protein dcd1A (dcd1A) from Dictyostelium discoideum (Social amoeba).